The chain runs to 397 residues: Phosphoglycerate kinase (397 aa).

Residues 21-23 (DMN), Arg36, 59-62 (HLGR), Arg114, and Arg147 each bind substrate. ATP is bound by residues Lys198, Glu320, and 346 to 349 (GGDT).

It belongs to the phosphoglycerate kinase family. In terms of assembly, monomer.

It is found in the cytoplasm. The enzyme catalyses (2R)-3-phosphoglycerate + ATP = (2R)-3-phospho-glyceroyl phosphate + ADP. It participates in carbohydrate degradation; glycolysis; pyruvate from D-glyceraldehyde 3-phosphate: step 2/5. The protein is Phosphoglycerate kinase of Neisseria gonorrhoeae (strain NCCP11945).